A 236-amino-acid chain; its full sequence is Large ribosomal subunit protein uL1 (236 aa).

It belongs to the universal ribosomal protein uL1 family. In terms of assembly, part of the 50S ribosomal subunit.

Its function is as follows. Binds directly to 23S rRNA. The L1 stalk is quite mobile in the ribosome, and is involved in E site tRNA release. In terms of biological role, protein L1 is also a translational repressor protein, it controls the translation of the L11 operon by binding to its mRNA. This is Large ribosomal subunit protein uL1 from Kocuria rhizophila (strain ATCC 9341 / DSM 348 / NBRC 103217 / DC2201).